A 290-amino-acid chain; its full sequence is Acetylglutamate kinase (290 aa).

Substrate is bound by residues 72-73, R94, and N187; that span reads GG.

Belongs to the acetylglutamate kinase family. ArgB subfamily.

It is found in the plastid. The protein localises to the chloroplast. It carries out the reaction N-acetyl-L-glutamate + ATP = N-acetyl-L-glutamyl 5-phosphate + ADP. The protein operates within amino-acid biosynthesis; L-arginine biosynthesis; N(2)-acetyl-L-ornithine from L-glutamate: step 2/4. Its function is as follows. Catalyzes the ATP-dependent phosphorylation of N-acetyl-L-glutamate. The polypeptide is Acetylglutamate kinase (Cyanidioschyzon merolae (strain NIES-3377 / 10D) (Unicellular red alga)).